The primary structure comprises 205 residues: Guanylate kinase (205 aa).

One can recognise a Guanylate kinase-like domain in the interval 6–185; the sequence is GLLIVLSGPS…ACERIKAIVV (180 aa). 13–20 contributes to the ATP binding site; sequence GPSGVGKG.

The protein belongs to the guanylate kinase family.

It localises to the cytoplasm. The catalysed reaction is GMP + ATP = GDP + ADP. Its function is as follows. Essential for recycling GMP and indirectly, cGMP. In Bacillus anthracis, this protein is Guanylate kinase.